A 103-amino-acid polypeptide reads, in one-letter code: Large ribosomal subunit protein bL21 (103 aa).

It belongs to the bacterial ribosomal protein bL21 family. As to quaternary structure, part of the 50S ribosomal subunit. Contacts protein L20.

Its function is as follows. This protein binds to 23S rRNA in the presence of protein L20. The chain is Large ribosomal subunit protein bL21 from Vibrio atlanticus (strain LGP32) (Vibrio splendidus (strain Mel32)).